The chain runs to 889 residues: MTDNKDDKTLSVAGKKTLTLKPSGVTQGTVRQDMGRGRTKAVVVETKRTRGPLKHKDERPITPVAATPAARPAEQRPMPPQPSGRPAPQPQPHQPRQEQNRPRGGVVLNDLSAGEMEARRRALAEAQIRDAEEAKRRAEDEVRRRREEEERLAREKEEAARRAAEEAARPPVEAEKTEEKVEAASPAVGERRAETRPQPGRAAPAATPAAPDGAALRGRRGTESEEDERRRSGAGAPRGKVVRPEPAKPAPRAKGDEGRRQGKLTLTTAAVDEDGSQRGRSLSAMRRRQEKFKRSQMQETREKISREVVLPETITIQELSQRMSERAVDVIKFLMKEGQMMKPGDLIDADLAELIAGEFGHTVKRVSESDVEEGIFNISDVDDDMQSRPPIVTIMGHVDHGKTSLLDAIRHANVVAGEAGGITQHIGAYQVEQNGQKITFIDTPGHAAFTAMRARGAQATDIAVLVVAADDSVMPQTIESINHAKAAGVPIIVAINKIDKPSANPQKVRTELLQHEVFVESMGGEVLDVEVSAKNQTNLDKLLEAILLQSEILDLKANPNRTAEGTVVEAELDRGRGAVATVLVQKGTLTPGQIIVAGDQWGRVRALVNDKGEHVKAAGPSTPVEVLGLSGTPAAGDRFAVVESESRAREISEYRQRLAREKAVARQSGSRGSLEQMMTQLQTSGVKEFPLVIKGDVQGSIEAISGALDKLGTDEVRARIVHSGAGGITESDVSLAEASNAAIIGFNVRANKQARDASERAGIEIRYYNIIYDLVDDVKAAMSGLLSPERRETFLGNAEILEVFNITKVGKVAGCRVTEGKVERGVGVRLVRDNVVIHEGKLKTLKRFKDEVSEVQSGQECGMAFENYEDIRAGDTIECFRVEHVTRTL.

The tract at residues 1–299 (MTDNKDDKTL…EKFKRSQMQE (299 aa)) is disordered. The span at 61–76 (ITPVAATPAARPAEQR) shows a compositional bias: low complexity. Over residues 77 to 93 (PMPPQPSGRPAPQPQPH) the composition is skewed to pro residues. Basic and acidic residues predominate over residues 116–182 (MEARRRALAE…EAEKTEEKVE (67 aa)). Positions 196–215 (RPQPGRAAPAATPAAPDGAA) are enriched in low complexity. A compositionally biased stretch (basic and acidic residues) spans 220–231 (RGTESEEDERRR). The tr-type G domain maps to 387–554 (SRPPIVTIMG…AILLQSEILD (168 aa)). Positions 396–403 (GHVDHGKT) are G1. 396 to 403 (GHVDHGKT) contacts GTP. The interval 421 to 425 (GITQH) is G2. The segment at 442–445 (DTPG) is G3. GTP is bound by residues 442-446 (DTPGH) and 496-499 (NKID). Residues 496 to 499 (NKID) are G4. Residues 532–534 (SAK) are G5.

Belongs to the TRAFAC class translation factor GTPase superfamily. Classic translation factor GTPase family. IF-2 subfamily.

The protein localises to the cytoplasm. In terms of biological role, one of the essential components for the initiation of protein synthesis. Protects formylmethionyl-tRNA from spontaneous hydrolysis and promotes its binding to the 30S ribosomal subunits. Also involved in the hydrolysis of GTP during the formation of the 70S ribosomal complex. This Rhizobium meliloti (strain 1021) (Ensifer meliloti) protein is Translation initiation factor IF-2.